The following is a 238-amino-acid chain: Large ribosomal subunit protein uL1 (238 aa).

This sequence belongs to the universal ribosomal protein uL1 family. Part of the 50S ribosomal subunit.

Its function is as follows. Binds directly to 23S rRNA. The L1 stalk is quite mobile in the ribosome, and is involved in E site tRNA release. Functionally, protein L1 is also a translational repressor protein, it controls the translation of the L11 operon by binding to its mRNA. The sequence is that of Large ribosomal subunit protein uL1 from Beutenbergia cavernae (strain ATCC BAA-8 / DSM 12333 / CCUG 43141 / JCM 11478 / NBRC 16432 / NCIMB 13614 / HKI 0122).